Here is a 662-residue protein sequence, read N- to C-terminus: Polyadenylate-binding protein 4 (662 aa).

A disordered region spans residues methionine 1–alanine 23. 4 consecutive RRM domains span residues cysteine 46–arginine 124, glycine 134–arginine 211, threonine 225–lysine 302, and leucine 328–arginine 405. Composition is skewed to low complexity over residues proline 480 to proline 489 and glutamine 506 to proline 518. 2 disordered regions span residues proline 480–proline 518 and asparagine 634–leucine 662. Positions serine 558 to glutamine 635 constitute a PABC domain. Over residues asparagine 634–proline 649 the composition is skewed to polar residues.

Belongs to the polyadenylate-binding protein type-1 family. In terms of assembly, interacts with ERD15/CID1. Interacts with Turnip mosaic virus (TuMV) VPg-Pro.

It localises to the cytoplasm. The protein localises to the nucleus. In terms of biological role, binds the poly(A) tail of mRNA. Appears to be an important mediator of the multiple roles of the poly(A) tail in mRNA biogenesis, stability and translation. During infection with potyvirus TuMV, acts as a potential integral component of the viral replicase complex that could play an important role in the regulation of potyviral RNA-dependent RNA polymerase (RdRp). The sequence is that of Polyadenylate-binding protein 4 (PAB4) from Arabidopsis thaliana (Mouse-ear cress).